The following is a 738-amino-acid chain: NADH dehydrogenase [ubiquinone] iron-sulfur protein 1, mitochondrial (738 aa).

The N-terminal 27 residues, 1–27, are a transit peptide targeting the mitochondrion; the sequence is MGLGLLASRALRSSRIIRNSTRTIVST. The 2Fe-2S ferredoxin-type domain occupies 66 to 144; sequence DVIEVFVDGY…GMKIKTDTPI (79 aa). [2Fe-2S] cluster-binding residues include C100, C111, C114, and C128. The 4Fe-4S His(Cys)3-ligated-type domain occupies 144–183; sequence IAKKAREGVMEFLLMNHPLDCPICDQGGECDLQDQSMAFG. [4Fe-4S] cluster contacts are provided by H160, C164, C167, C173, C212, C215, C218, and C262. One can recognise a 4Fe-4S Mo/W bis-MGD-type domain in the interval 281-337; that stretch reads LKGTESIDVTDAVGSNIRIDSRGPEVMRVVPRLNEDINEEWISDKTRFFYDGLKRQR.

It belongs to the complex I 75 kDa subunit family. In terms of assembly, complex I is composed of about 45 different subunits. This is a component of the iron-sulfur (IP) fragment of the enzyme. [2Fe-2S] cluster serves as cofactor. Requires [4Fe-4S] cluster as cofactor.

The protein resides in the mitochondrion inner membrane. It carries out the reaction a ubiquinone + NADH + 5 H(+)(in) = a ubiquinol + NAD(+) + 4 H(+)(out). In terms of biological role, core subunit of the mitochondrial membrane respiratory chain NADH dehydrogenase (Complex I) that is believed to belong to the minimal assembly required for catalysis. Complex I functions in the transfer of electrons from NADH to the respiratory chain. The immediate electron acceptor for the enzyme is believed to be ubiquinone. This is the largest subunit of complex I and it is a component of the iron-sulfur (IP) fragment of the enzyme. It may form part of the active site crevice where NADH is oxidized. In Solanum tuberosum (Potato), this protein is NADH dehydrogenase [ubiquinone] iron-sulfur protein 1, mitochondrial.